The primary structure comprises 363 residues: MSDIIKLKHVRKEYDDGFVALKDINLTIESGKFYSLLGPSGSGKTTILRIIAGFSEPTSGQVFFDGQDITNLDAAKRKINTVFQNYALFPHMNVFENVAFGLQIKKKDKQEIKLAVKEALHMVQLDGFANREISELSGGQQQRVAIARAIVNQPKVLLLDESLSALDKRLRKDMQFELREIQKKLGITFIFVTHDQEEALAMSDEIFVLNEGKIQQSGSPVDIYDEPVNDFVARFIGDSNILSGRMIKDYEVEFGNHRFECADAGIKPGEKVEVVLRPEDLDITDIEHGKLRVVVESQLFLGDHFEIKAIDSDENEWLIHSTNPTKIGKEVGVYFDPEDIHVMRFGESEAEFDKRLEAYEGEE.

Residues 5-236 (IKLKHVRKEY…PVNDFVARFI (232 aa)) enclose the ABC transporter domain. 38-45 (GPSGSGKT) contributes to the ATP binding site.

It belongs to the ABC transporter superfamily. Spermidine/putrescine importer (TC 3.A.1.11.1) family. As to quaternary structure, the complex is composed of two ATP-binding proteins (PotA), two transmembrane proteins (PotB and PotC) and a solute-binding protein (PotD).

It localises to the cell membrane. It catalyses the reaction ATP + H2O + polyamine-[polyamine-binding protein]Side 1 = ADP + phosphate + polyamineSide 2 + [polyamine-binding protein]Side 1.. Part of the ABC transporter complex PotABCD involved in spermidine/putrescine import. Responsible for energy coupling to the transport system. In Lactobacillus johnsonii (strain CNCM I-12250 / La1 / NCC 533), this protein is Spermidine/putrescine import ATP-binding protein PotA.